The following is a 101-amino-acid chain: Small ribosomal subunit protein uS14 (101 aa).

The protein belongs to the universal ribosomal protein uS14 family. Part of the 30S ribosomal subunit. Contacts proteins S3 and S10.

In terms of biological role, binds 16S rRNA, required for the assembly of 30S particles and may also be responsible for determining the conformation of the 16S rRNA at the A site. The polypeptide is Small ribosomal subunit protein uS14 (Methylibium petroleiphilum (strain ATCC BAA-1232 / LMG 22953 / PM1)).